Consider the following 787-residue polypeptide: Protein translocase subunit SecA (787 aa).

ATP is bound by residues glutamine 85, 103 to 107 (GEGKT), and aspartate 492.

Belongs to the SecA family. In terms of assembly, monomer and homodimer. Part of the essential Sec protein translocation apparatus which comprises SecA, SecYEG and auxiliary proteins SecDF. Other proteins may also be involved.

The protein resides in the cell membrane. It localises to the cytoplasm. It catalyses the reaction ATP + H2O + cellular proteinSide 1 = ADP + phosphate + cellular proteinSide 2.. In terms of biological role, part of the Sec protein translocase complex. Interacts with the SecYEG preprotein conducting channel. Has a central role in coupling the hydrolysis of ATP to the transfer of proteins into and across the cell membrane, serving as an ATP-driven molecular motor driving the stepwise translocation of polypeptide chains across the membrane. This Lactiplantibacillus plantarum (strain ATCC BAA-793 / NCIMB 8826 / WCFS1) (Lactobacillus plantarum) protein is Protein translocase subunit SecA.